Here is a 426-residue protein sequence, read N- to C-terminus: Glutamate-1-semialdehyde 2,1-aminomutase (426 aa).

N6-(pyridoxal phosphate)lysine is present on Lys265.

Belongs to the class-III pyridoxal-phosphate-dependent aminotransferase family. HemL subfamily. In terms of assembly, homodimer. It depends on pyridoxal 5'-phosphate as a cofactor.

The protein resides in the cytoplasm. The catalysed reaction is (S)-4-amino-5-oxopentanoate = 5-aminolevulinate. It functions in the pathway porphyrin-containing compound metabolism; protoporphyrin-IX biosynthesis; 5-aminolevulinate from L-glutamyl-tRNA(Glu): step 2/2. In Salmonella agona (strain SL483), this protein is Glutamate-1-semialdehyde 2,1-aminomutase.